Here is a 446-residue protein sequence, read N- to C-terminus: Mannosyltransferase KTR6 (446 aa).

Topologically, residues 1 to 8 are cytoplasmic; the sequence is MHVLLSKK. The helical; Signal-anchor for type II membrane protein transmembrane segment at 9–29 threads the bilayer; the sequence is IARFLLISFVFVLALMVTINH. Residues 30-114 form a stem region region; it reads PKTKQMSEQY…MVPSYINHRG (85 aa). The Lumenal segment spans residues 30-446; it reads PKTKQMSEQY…DKPEGWDRLP (417 aa). N-linked (GlcNAc...) asparagine glycosylation is found at N82 and N98. Residues 115–446 form a catalytic region; it reads SPPKACFVSL…DKPEGWDRLP (332 aa). Residue E334 is the Nucleophile of the active site.

The protein belongs to the glycosyltransferase 15 family.

It localises to the membrane. It functions in the pathway protein modification; protein glycosylation. Its function is as follows. Glycosyltransferase that transfers an alpha-D-mannosyl residue from GDP-mannose into lipid-linked oligosaccharide, forming an alpha-(1-&gt;2)-D-mannosyl-D-mannose linkage. Required for addition of mannosylphosphate in yeast mannan. Recognizes any oligosaccharides with at least one alpha-1,2-linked mannobiose unit. This is Mannosyltransferase KTR6 (KTR6) from Saccharomyces cerevisiae (strain ATCC 204508 / S288c) (Baker's yeast).